Here is a 786-residue protein sequence, read N- to C-terminus: Receptor-like protein 30 (786 aa).

Positions 1-30 (MIPSQSNSFSGSVITLYFFLLGSLVLRTLA) are cleaved as a signal peptide. Residues 31–739 (SSRLHYCRHD…SEPEEQVINW (709 aa)) lie on the Extracellular side of the membrane. 4 N-linked (GlcNAc...) asparagine glycosylation sites follow: Asn-67, Asn-98, Asn-115, and Asn-133. LRR repeat units follow at residues 110–133 (LQQLQNLTLSDCHLYGEVTSSLGN), 134–158 (LSRLTHLDLSSNQLTGEVLASVSKL), 159–181 (NQLRDLLLSENSFSGNIPTSFTN), and 183–204 (TKLSSLDISSNQFTLENFSFIL). Asn-181, Asn-199, and Asn-206 each carry an N-linked (GlcNAc...) asparagine glycan. LRR repeat units lie at residues 207-231 (LTSLSSLNVASNHFKSTLPSDMSGL), 233-255 (NLKYFDVRENSFVGTFPTSLFTI), 257-279 (SLQIVYLEGNQFMGPIKFGNISS), 280-304 (SSRLWDLNLADNKFDGPIPEYISEI), 305-328 (HSLIVLDLSHNNLVGPIPTSISKL), 329-352 (VNLQHLSLSNNTLEGEVPGCLWGL), 354-375 (TVTLSHNSFNSFGKSSSGALDG), 376-399 (ESMQELDLGSNSLGGPFPHWICKQ), 400-423 (RFLKYLDLSNNLFNGSIPPCLKNS), 425-447 (YWLKGLVLRNNSFSGFLPDVFVN), 448-472 (ASMLLSLDVSYNRLEGKLPKSLINC), 474-496 (GMELLNVGSNIIKDTFPSWLVSL), 497-524 (PSLRVLILRSNAFYGSLYYDHISFGFQH), and 526-546 (RLIDISQNGFSGTLSPLYFSN). Asn-276 carries N-linked (GlcNAc...) asparagine glycosylation. N-linked (GlcNAc...) asparagine glycosylation occurs at Asn-338. 5 N-linked (GlcNAc...) asparagine glycosylation sites follow: Asn-413, Asn-422, Asn-434, Asn-447, and Asn-471. An N-linked (GlcNAc...) asparagine glycan is attached at Asn-558. LRR repeat units lie at residues 596 to 621 (IPYFFRAIDFSGNRFFGNIPESVGLL), 622 to 645 (KELRLLNLSGNSFTSNIPQSLANL), 646 to 669 (TNLETLDLSRNQLSGHIPRDLGSL), and 671 to 694 (FLSTMNFSHNLLEGPVPLGTQFQS). N-linked (GlcNAc...) asparagine glycans are attached at residues Asn-628 and Asn-644. Asn-676 is a glycosylation site (N-linked (GlcNAc...) asparagine). Residues 740-760 (IAAAIAYGPGVFCGLVIGHIF) form a helical membrane-spanning segment. Residues 761–786 (FTAHKHEWFMEKFHRNKRRVVTTSAR) are Cytoplasmic-facing.

This sequence belongs to the RLP family.

It is found in the cell membrane. Receptor for microbe-associated molecular patterns (MAMPs) that induces a BAK1-dependent basal immune response to necrotrophic fungi (e.g. S.sclerotiorum) in the presence of MAMPs (e.g. flg22 and SCLEROTINIA CULTURE FILTRATE ELICITOR1 (SCFE1) from the necrotrophic fungal pathogen S.sclerotiorum). Functionality seems to depend on the presence of the receptor kinase SOBIR1 as an adapter protein. Required for full non-host resistance to bacterial pathogens (e.g. P.syringae pv phaseolicola). The chain is Receptor-like protein 30 from Arabidopsis thaliana (Mouse-ear cress).